Consider the following 490-residue polypeptide: Homoserine O-acetyltransferase (490 aa).

One can recognise an AB hydrolase-1 domain in the interval 48–354; it reads NVILVCHALT…NSEYGHDAFL (307 aa). Ser-153 (nucleophile) is an active-site residue. Arg-223 contributes to the substrate binding site. Active-site residues include Asp-317 and His-350. Residue Asp-351 coordinates substrate. CBS domains lie at 377-434 and 438-490; these read MSHT…ANSI and MTKN…LYEK.

It belongs to the AB hydrolase superfamily. MetX family. As to quaternary structure, homodimer.

It is found in the cytoplasm. The catalysed reaction is L-homoserine + acetyl-CoA = O-acetyl-L-homoserine + CoA. Its pathway is amino-acid biosynthesis; L-methionine biosynthesis via de novo pathway; O-acetyl-L-homoserine from L-homoserine: step 1/1. Transfers an acetyl group from acetyl-CoA to L-homoserine, forming acetyl-L-homoserine. This Methanosphaera stadtmanae (strain ATCC 43021 / DSM 3091 / JCM 11832 / MCB-3) protein is Homoserine O-acetyltransferase.